We begin with the raw amino-acid sequence, 397 residues long: Tryptophan synthase beta chain (397 aa).

K87 carries the post-translational modification N6-(pyridoxal phosphate)lysine.

This sequence belongs to the TrpB family. As to quaternary structure, tetramer of two alpha and two beta chains. The cofactor is pyridoxal 5'-phosphate.

The catalysed reaction is (1S,2R)-1-C-(indol-3-yl)glycerol 3-phosphate + L-serine = D-glyceraldehyde 3-phosphate + L-tryptophan + H2O. It participates in amino-acid biosynthesis; L-tryptophan biosynthesis; L-tryptophan from chorismate: step 5/5. Its function is as follows. The beta subunit is responsible for the synthesis of L-tryptophan from indole and L-serine. This Cronobacter sakazakii (strain ATCC BAA-894) (Enterobacter sakazakii) protein is Tryptophan synthase beta chain.